We begin with the raw amino-acid sequence, 406 residues long: Tryptophan synthase beta chain (406 aa).

The residue at position 99 (lysine 99) is an N6-(pyridoxal phosphate)lysine.

Belongs to the TrpB family. In terms of assembly, tetramer of two alpha and two beta chains. It depends on pyridoxal 5'-phosphate as a cofactor.

It carries out the reaction (1S,2R)-1-C-(indol-3-yl)glycerol 3-phosphate + L-serine = D-glyceraldehyde 3-phosphate + L-tryptophan + H2O. The protein operates within amino-acid biosynthesis; L-tryptophan biosynthesis; L-tryptophan from chorismate: step 5/5. Its function is as follows. The beta subunit is responsible for the synthesis of L-tryptophan from indole and L-serine. Essential for production of nod factors and establishment of symbiosis. The protein is Tryptophan synthase beta chain of Rhizobium etli (strain ATCC 51251 / DSM 11541 / JCM 21823 / NBRC 15573 / CFN 42).